A 627-amino-acid chain; its full sequence is tRNA uridine 5-carboxymethylaminomethyl modification enzyme MnmG (627 aa).

Residues 13–18 (GGGHAG), Val-125, and Ser-180 contribute to the FAD site. 274–288 (GPRYCPSIEDKVVRF) provides a ligand contact to NAD(+). Residue Gln-371 participates in FAD binding.

The protein belongs to the MnmG family. In terms of assembly, homodimer. Heterotetramer of two MnmE and two MnmG subunits. FAD serves as cofactor.

The protein localises to the cytoplasm. NAD-binding protein involved in the addition of a carboxymethylaminomethyl (cmnm) group at the wobble position (U34) of certain tRNAs, forming tRNA-cmnm(5)s(2)U34. The polypeptide is tRNA uridine 5-carboxymethylaminomethyl modification enzyme MnmG (Francisella philomiragia subsp. philomiragia (strain ATCC 25017 / CCUG 19701 / FSC 153 / O#319-036)).